Reading from the N-terminus, the 98-residue chain is UPF0213 protein BPUM_0019 (98 aa).

The GIY-YIG domain occupies 4-79 (HNHYFYVLKC…KTWTRKKKDL (76 aa)).

The protein belongs to the UPF0213 family.

The chain is UPF0213 protein BPUM_0019 from Bacillus pumilus (strain SAFR-032).